Here is a 182-residue protein sequence, read N- to C-terminus: Transcription termination/antitermination protein NusG (182 aa).

This sequence belongs to the NusG family.

In terms of biological role, participates in transcription elongation, termination and antitermination. The chain is Transcription termination/antitermination protein NusG from Chlamydia muridarum (strain MoPn / Nigg).